A 602-amino-acid chain; its full sequence is Elongation factor 4 (602 aa).

Residues 7-196 (SKIRNFCIIA…HPQNEIKSPT (190 aa)) form the tr-type G domain. GTP contacts are provided by residues 19-24 (DHGKST) and 136-139 (NKVD).

The protein belongs to the TRAFAC class translation factor GTPase superfamily. Classic translation factor GTPase family. LepA subfamily.

It is found in the cell inner membrane. The catalysed reaction is GTP + H2O = GDP + phosphate + H(+). Required for accurate and efficient protein synthesis under certain stress conditions. May act as a fidelity factor of the translation reaction, by catalyzing a one-codon backward translocation of tRNAs on improperly translocated ribosomes. Back-translocation proceeds from a post-translocation (POST) complex to a pre-translocation (PRE) complex, thus giving elongation factor G a second chance to translocate the tRNAs correctly. Binds to ribosomes in a GTP-dependent manner. This Prochlorococcus marinus (strain MIT 9515) protein is Elongation factor 4.